The chain runs to 51 residues: Large ribosomal subunit protein bL33 (51 aa).

The segment at 1-21 is disordered; sequence MRDKIKLESGAGTGHFYTTTK.

The protein belongs to the bacterial ribosomal protein bL33 family.

The protein is Large ribosomal subunit protein bL33 of Neisseria gonorrhoeae (strain ATCC 700825 / FA 1090).